Consider the following 293-residue polypeptide: ELMO domain-containing protein 2 (293 aa).

Positions 126–282 (QHEKMLLKLW…KFHERIKGLL (157 aa)) constitute an ELMO domain.

Acts as a GTPase-activating protein (GAP) toward guanine nucleotide exchange factors like ARL2, ARL3, ARF1 and ARF6, but not for GTPases outside the Arf family. The polypeptide is ELMO domain-containing protein 2 (Elmod2) (Mus musculus (Mouse)).